Here is a 281-residue protein sequence, read N- to C-terminus: Ras-related protein Rab-40C (281 aa).

Positions 23, 26, 27, and 46 each coordinate GTP. The switch-I stretch occupies residues 41-49 (SPYAYSNGI). Residues serine 46 and aspartate 69 each contribute to the Mg(2+) site. GTP-binding residues include glycine 72, asparagine 126, and arginine 127. Residues 72 to 88 (GQGRFCTIFRSYSRGAQ) are switch-II. In terms of domain architecture, SOCS box spans 175-228 (LMRHGMEKIWRPNRVFSLQDLCCRAIVSCTPVHLIDKLPLPVTIKSHLKSFSMA). Residues 245–281 (SGAGGGGSKGNSLKRSKSIRPPQSPPQNCSRSNCKIS) form a disordered region. A compositionally biased stretch (polar residues) spans 270–281 (PQNCSRSNCKIS). The S-palmitoyl cysteine moiety is linked to residue cysteine 273. Cysteine 278 carries the S-geranylgeranyl cysteine lipid modification.

Belongs to the small GTPase superfamily. Rab family. As to quaternary structure, component of the cullin-5-RING E3 ubiquitin-protein ligase complex (ECS(RAB40C) complex) composed of CUL5, Elongin BC (ELOB and ELOC), RNF7/RBX2 and RAB40C. Interacts with protein phosphatase 6 (PP6) complex components ANKRD28, ANKRD52, PPP6C, PP6R1 and PP6R2; the interaction leads to ANKRD28 ubiquitination and decreased PP6 activity. Interacts with DAB2IP; DAB2IP acts as a GAP for RAB40C. It depends on Mg(2+) as a cofactor.

It localises to the cell membrane. Its subcellular location is the cytoplasm. The protein localises to the cytosol. The protein resides in the golgi apparatus membrane. The catalysed reaction is GTP + H2O = GDP + phosphate + H(+). The protein operates within protein modification; protein ubiquitination. With respect to regulation, regulated by guanine nucleotide exchange factors (GEFs) which promote the exchange of bound GDP for free GTP. Regulated by GTPase activating proteins (GAPs) including DAB2IP, which increase the GTP hydrolysis activity. Inhibited by GDP dissociation inhibitors (GDIs). Its function is as follows. RAB40C small GTPase acts as substrate-recognition component of the ECS(RAB40C) E3 ubiquitin ligase complex which mediates the ubiquitination and subsequent proteasomal degradation of target proteins. The Rab40 subfamily belongs to the Rab family that are key regulators of intracellular membrane trafficking, from the formation of transport vesicles to their fusion with membranes. Rabs cycle between an inactive GDP-bound form and an active GTP-bound form that is able to recruit to membranes different sets of downstream effectors directly responsible for vesicle formation, movement, tethering and fusion. As part of the ECS(RAB40C) complex, mediates ANKRD28 ubiquitination and degradation, thereby inhibiting protein phosphatase 6 (PP6) complex activity and focal adhesion assembly during cell migration. Also negatively regulate lipid droplets accumulation in a GTP-dependent manner. This is Ras-related protein Rab-40C from Homo sapiens (Human).